We begin with the raw amino-acid sequence, 136 residues long: Non-structural protein 1 (136 aa).

Belongs to the pneumovirus non-structural protein 1 family. As to quaternary structure, monomer. Homomultimer. Heteromultimer with NS2. Interacts with the matrix protein M. Interacts with host ELOC and CUL2; this interaction allows NS1 to form an active E3 ligase with ELOC and CUL2. Interacts with host IRF3; this interaction leads to the disrupted association of IRF3 with CREBBP and thus reduced binding of IRF3 to the IFN-beta promoter. Interacts with host MAVS; this interaction prevents MAVS binding to RIGI and inhibits signaling pathway leading to interferon production. Interacts with host TRIM25 (via SPRY domain); this interaction suppresses RIGI ubiquitination and results in decreased interaction between RIGI and MAVS.

Its subcellular location is the host cytoplasm. It localises to the host mitochondrion. The protein localises to the host nucleus. Its function is as follows. Plays a major role in antagonizing the type I IFN-mediated antiviral response by degrading or inhibiting multiple cellular factors required for either IFN induction or response pathways. Acts cooperatively with NS2 to repress activation and nuclear translocation of host IFN-regulatory factor IRF3. Also disrupts the association of IRF3 with CREBBP. Interacts with host mitochondrial-associated membrane (MAM) MAVS and prevents the interaction with RIGI. Interacts with TRIM25 to suppress TRIM25-mediated RIGI ubiquitination and thereby RIGI-MAVS interaction. Together with NS2, participates in the proteasomal degradation of host STAT2, IRF3, IRF7, TBK1 and RIGI through a NS-degradasome involving CUL2 and Elongin-C. The degradasome requires an intact mitochondrial MAVS. Decreases the levels of host TRAF3 and IKBKE/IKK-epsilon. As functions other than disruptions of the type I IFN-mediated antiviral signaling pathways, induces host SOCS1 and SOCS3 expression. Suppresses premature apoptosis by an NF-kappa-B-dependent, interferon-independent mechanism and thus facilitates virus growth. Additionally, NS1 may serve some inhibitory role in viral transcription and RNA replication. Suppresses proliferation and activation of host CD103+ CD8+ cytotoxic T-lymphocytes and Th17 helper T-lymphocytes. The chain is Non-structural protein 1 (1C) from Bos taurus (Bovine).